The primary structure comprises 628 residues: Cystathionine gamma-synthase-like enzyme iboG2 (628 aa).

Tyr313 lines the substrate pocket. Position 417 is an N6-(pyridoxal phosphate)lysine (Lys417).

This sequence belongs to the trans-sulfuration enzymes family. Pyridoxal 5'-phosphate is required as a cofactor.

Its pathway is secondary metabolite biosynthesis. Its function is as follows. Cystathionine gamma-synthase-like enzyme; part of the gene cluster that mediates the biosynthesis of the psychoactive metabolites ibotenic acid and muscimol. The first committed step is glutamate hydroxylation by the 2-oxoglutarate-dependent dioxygenase iboH, and the last step is decarboxylation of ibotenic acid to muscimol by the decarboxylase iboD. The order of the intermediate reactions is somewhat ambiguous. IboA likely activates the carboxylic acid at position 5 to introduce an amide bond, and the flavin monooxygenase iboF generates the N-O bond. There are several options for the latter step. One option is that iboF directly hydroxylates the amide nitrogen formed by iboA to produce a hydroxamic acid species. Another option is that iboF hydroxylates an external N-containing compound, whose resulting N-O bond is subsequently introduced into the hydroxyglutamate scaffold. The paralogous PLP-dependent cystathionine gamma-synthase-like enzymes iboG1 and iboG2 are likely involved in substitution of the OH group at position 3 by the O-N moiety. The first cyclic intermediate is most probably tricholomic acid which is likely desaturated to ibotenic acid by the cytochrome P450 monooxygenase iboC. In Amanita muscaria (strain Koide BX008), this protein is Cystathionine gamma-synthase-like enzyme iboG2.